The primary structure comprises 313 residues: GTPase Era (313 aa).

Residues 20–187 (RSGFVALIGA…MDYLAETLPE (168 aa)) enclose the Era-type G domain. Residues 28–35 (GATNAGKS) form a G1 region. 28–35 (GATNAGKS) contributes to the GTP binding site. Positions 54 to 58 (QTTRA) are G2. The G3 stretch occupies residues 75–78 (DTPG). Residues 75-79 (DTPGI) and 137-140 (NKVD) contribute to the GTP site. Residues 137-140 (NKVD) are G4. The interval 166-168 (ISA) is G5. The region spanning 218–295 (LHQELPYASH…HLFLFVKVRE (78 aa)) is the KH type-2 domain.

This sequence belongs to the TRAFAC class TrmE-Era-EngA-EngB-Septin-like GTPase superfamily. Era GTPase family. In terms of assembly, monomer.

Its subcellular location is the cytoplasm. It is found in the cell inner membrane. An essential GTPase that binds both GDP and GTP, with rapid nucleotide exchange. Plays a role in 16S rRNA processing and 30S ribosomal subunit biogenesis and possibly also in cell cycle regulation and energy metabolism. The protein is GTPase Era of Rhizobium meliloti (strain 1021) (Ensifer meliloti).